A 356-amino-acid chain; its full sequence is 3,4-dihydroxy-2-butanone 4-phosphate synthase (356 aa).

A DHBP synthase region spans residues Met-1–Met-211. Residues Arg-38–Glu-39, Asp-43, Arg-150–Thr-154, and Glu-174 each bind D-ribulose 5-phosphate. Glu-39 serves as a coordination point for Mg(2+). Position 153 (His-153) interacts with Mg(2+). The segment at Asn-212–Ala-356 is GTP cyclohydrolase II-like.

In the N-terminal section; belongs to the DHBP synthase family. It in the C-terminal section; belongs to the GTP cyclohydrolase II family. The cofactor is Mg(2+). Requires Mn(2+) as cofactor.

The catalysed reaction is D-ribulose 5-phosphate = (2S)-2-hydroxy-3-oxobutyl phosphate + formate + H(+). It functions in the pathway cofactor biosynthesis; riboflavin biosynthesis; 2-hydroxy-3-oxobutyl phosphate from D-ribulose 5-phosphate: step 1/1. Catalyzes the conversion of D-ribulose 5-phosphate to formate and 3,4-dihydroxy-2-butanone 4-phosphate. The polypeptide is 3,4-dihydroxy-2-butanone 4-phosphate synthase (ribB) (Sulfurospirillum multivorans (Dehalospirillum multivorans)).